A 93-amino-acid polypeptide reads, in one-letter code: uncharacterized protein (93 aa).

A disordered region spans residues 41-62 (RSANRIPTTSSTSTSGTIPTTT). Residues 46-62 (IPTTSSTSTSGTIPTTT) show a composition bias toward low complexity.

This is an uncharacterized protein from Dictyostelium discoideum (Social amoeba).